The following is a 162-amino-acid chain: NADH-quinone oxidoreductase subunit I (162 aa).

4Fe-4S ferredoxin-type domains follow at residues 52 to 82 (LRRY…IEAG) and 93 to 122 (TRYD…EGPN). Cys62, Cys65, Cys68, Cys72, Cys102, Cys105, Cys108, and Cys112 together coordinate [4Fe-4S] cluster.

This sequence belongs to the complex I 23 kDa subunit family. As to quaternary structure, NDH-1 is composed of 14 different subunits. Subunits NuoA, H, J, K, L, M, N constitute the membrane sector of the complex. The cofactor is [4Fe-4S] cluster.

The protein localises to the cell inner membrane. It catalyses the reaction a quinone + NADH + 5 H(+)(in) = a quinol + NAD(+) + 4 H(+)(out). Functionally, NDH-1 shuttles electrons from NADH, via FMN and iron-sulfur (Fe-S) centers, to quinones in the respiratory chain. The immediate electron acceptor for the enzyme in this species is believed to be ubiquinone. Couples the redox reaction to proton translocation (for every two electrons transferred, four hydrogen ions are translocated across the cytoplasmic membrane), and thus conserves the redox energy in a proton gradient. The protein is NADH-quinone oxidoreductase subunit I of Methylocella silvestris (strain DSM 15510 / CIP 108128 / LMG 27833 / NCIMB 13906 / BL2).